Here is a 316-residue protein sequence, read N- to C-terminus: ATP synthase gamma chain (316 aa).

This sequence belongs to the ATPase gamma chain family. In terms of assembly, F-type ATPases have 2 components, CF(1) - the catalytic core - and CF(0) - the membrane proton channel. CF(1) has five subunits: alpha(3), beta(3), gamma(1), delta(1), epsilon(1). CF(0) has three main subunits: a, b and c.

The protein resides in the cellular thylakoid membrane. Its function is as follows. Produces ATP from ADP in the presence of a proton gradient across the membrane. The gamma chain is believed to be important in regulating ATPase activity and the flow of protons through the CF(0) complex. The sequence is that of ATP synthase gamma chain from Prochlorococcus marinus (strain MIT 9215).